The primary structure comprises 122 residues: Large ribosomal subunit protein uL14 (122 aa).

This sequence belongs to the universal ribosomal protein uL14 family. As to quaternary structure, part of the 50S ribosomal subunit. Forms a cluster with proteins L3 and L19. In the 70S ribosome, L14 and L19 interact and together make contacts with the 16S rRNA in bridges B5 and B8.

Functionally, binds to 23S rRNA. Forms part of two intersubunit bridges in the 70S ribosome. This Herpetosiphon aurantiacus (strain ATCC 23779 / DSM 785 / 114-95) protein is Large ribosomal subunit protein uL14.